We begin with the raw amino-acid sequence, 323 residues long: tRNA dimethylallyltransferase (323 aa).

12 to 19 (GPTAAGKT) is a binding site for ATP. 14–19 (TAAGKT) contributes to the substrate binding site. Interaction with substrate tRNA stretches follow at residues 37-40 (DSAL) and 161-165 (QRLTR).

Belongs to the IPP transferase family. As to quaternary structure, monomer. Mg(2+) is required as a cofactor.

The enzyme catalyses adenosine(37) in tRNA + dimethylallyl diphosphate = N(6)-dimethylallyladenosine(37) in tRNA + diphosphate. Functionally, catalyzes the transfer of a dimethylallyl group onto the adenine at position 37 in tRNAs that read codons beginning with uridine, leading to the formation of N6-(dimethylallyl)adenosine (i(6)A). In Pseudomonas fluorescens (strain ATCC BAA-477 / NRRL B-23932 / Pf-5), this protein is tRNA dimethylallyltransferase.